A 151-amino-acid polypeptide reads, in one-letter code: Deoxyuridine 5'-triphosphate nucleotidohydrolase (151 aa).

Residues 70–72 (RSG), Asn-83, 87–89 (LID), and Met-97 each bind substrate.

Belongs to the dUTPase family. It depends on Mg(2+) as a cofactor.

It catalyses the reaction dUTP + H2O = dUMP + diphosphate + H(+). Its pathway is pyrimidine metabolism; dUMP biosynthesis; dUMP from dCTP (dUTP route): step 2/2. Its function is as follows. This enzyme is involved in nucleotide metabolism: it produces dUMP, the immediate precursor of thymidine nucleotides and it decreases the intracellular concentration of dUTP so that uracil cannot be incorporated into DNA. The sequence is that of Deoxyuridine 5'-triphosphate nucleotidohydrolase from Pseudomonas fluorescens (strain ATCC BAA-477 / NRRL B-23932 / Pf-5).